Reading from the N-terminus, the 767-residue chain is Golgin subfamily A member 1 (767 aa).

The segment at 13-58 is disordered; sequence TAVAQRPGGATRIPRSVSKESVASMGADSGDDFASDGSSSREDLSS. Phosphoserine occurs at positions 30, 36, 41, 47, 50, and 51. Residues 50-657 adopt a coiled-coil conformation; sequence SSSREDLSSQ…RKTLQKELKI (608 aa). The 50-residue stretch at 688-737 folds into the GRIP domain; sequence TDAREINFEYLKHVVLKFMSCRESEAFHLIKAVSVLLNFSQEEENMLKET. The tract at residues 748 to 767 is disordered; that stretch reads KPAPKGSIRPSISNPRIPWS.

In terms of assembly, interacts with RAB6A. Directly interacts with TBC1D23. Interacts with FAM91A1; this interaction may be mediated by TBC1D23. Interacts with ARL1; this interaction recruits Golgin-97/GOLGA1 onto the Golgi apparatus. In terms of processing, MARylated by PARP12; MARylation is required for basolateral export of E-Cadherin.

Its subcellular location is the golgi apparatus membrane. It localises to the golgi apparatus. The protein localises to the trans-Golgi network membrane. The protein resides in the cytoplasmic vesicle. It is found in the secretory vesicle. Its subcellular location is the acrosome. Involved in vesicular trafficking at the Golgi apparatus level. Involved in endosome-to-Golgi trafficking. Mechanistically, captures transport vesicles arriving from endosomes via the protein TBC1D23. Recognized vesicles are then tethered to the trans-Golgi before subsequent SNARE engagement and vesicle fusion. Selectively regulates E-cadherin transport from the trans-Golgi network in tubulovesicular carriers. In terms of biological role, (Microbial infection) Plays an important role in poxvirus morphogenesis. Translocates into the viral factories where it may transport the membrane fragments and associated protein factors important for virus maturation to the sites of virion assembly. The chain is Golgin subfamily A member 1 (GOLGA1) from Homo sapiens (Human).